A 219-amino-acid polypeptide reads, in one-letter code: Response regulator ArlR (219 aa).

Positions 3-116 (NILIVEDEQN…ELLARIRAVL (114 aa)) constitute a Response regulatory domain. Residue Asp52 is modified to 4-aspartylphosphate. The ompR/PhoB-type DNA-binding region spans 122-219 (KDVLDINGII…TVRGVGYVIR (98 aa)).

Post-translationally, phosphorylated by ArlS.

The protein resides in the cytoplasm. Functionally, member of the two-component regulatory system ArlS/ArlR. This is Response regulator ArlR (arlR) from Staphylococcus epidermidis (strain ATCC 12228 / FDA PCI 1200).